Here is a 41-residue protein sequence, read N- to C-terminus: Photosystem I reaction center subunit IX (41 aa).

Residues 7–27 form a helical membrane-spanning segment; that stretch reads YLSTAPVLTLVSLTAVAGLLI.

This sequence belongs to the PsaJ family.

Its subcellular location is the plastid. The protein resides in the chloroplast thylakoid membrane. May help in the organization of the PsaE and PsaF subunits. The chain is Photosystem I reaction center subunit IX from Chlorella vulgaris (Green alga).